The chain runs to 504 residues: Deoxyguanosinetriphosphate triphosphohydrolase (504 aa).

The HD domain maps to 66–273 (RLTHSLEVQQ…MEAADDISYC (208 aa)).

Belongs to the dGTPase family. Type 1 subfamily. In terms of assembly, homotetramer. It depends on Mg(2+) as a cofactor.

The catalysed reaction is dGTP + H2O = 2'-deoxyguanosine + triphosphate + H(+). DGTPase preferentially hydrolyzes dGTP over the other canonical NTPs. The chain is Deoxyguanosinetriphosphate triphosphohydrolase from Klebsiella pneumoniae subsp. pneumoniae (strain ATCC 700721 / MGH 78578).